Here is a 200-residue protein sequence, read N- to C-terminus: Small ribosomal subunit protein uS4 (200 aa).

The disordered stretch occupies residues 22 to 42; sequence TGKELEKRPYAPGPHGPGQRK. One can recognise an S4 RNA-binding domain in the interval 92-155; sequence ARLDNVVYKL…RNLSIIKESV (64 aa).

This sequence belongs to the universal ribosomal protein uS4 family. In terms of assembly, part of the 30S ribosomal subunit. Contacts protein S5. The interaction surface between S4 and S5 is involved in control of translational fidelity.

One of the primary rRNA binding proteins, it binds directly to 16S rRNA where it nucleates assembly of the body of the 30S subunit. In terms of biological role, with S5 and S12 plays an important role in translational accuracy. The chain is Small ribosomal subunit protein uS4 from Bacillus velezensis (strain DSM 23117 / BGSC 10A6 / LMG 26770 / FZB42) (Bacillus amyloliquefaciens subsp. plantarum).